The following is a 655-amino-acid chain: UvrABC system protein C (655 aa).

The GIY-YIG domain occupies 16–95 (TDPGVYRFRD…IKEFAPRYNL (80 aa)). The region spanning 207 to 242 (KRFIGTLEKQMAEAVAELDYERAARLRDDVIALRKV) is the UVR domain.

The protein belongs to the UvrC family. In terms of assembly, interacts with UvrB in an incision complex.

The protein resides in the cytoplasm. Its function is as follows. The UvrABC repair system catalyzes the recognition and processing of DNA lesions. UvrC both incises the 5' and 3' sides of the lesion. The N-terminal half is responsible for the 3' incision and the C-terminal half is responsible for the 5' incision. This is UvrABC system protein C from Renibacterium salmoninarum (strain ATCC 33209 / DSM 20767 / JCM 11484 / NBRC 15589 / NCIMB 2235).